The chain runs to 357 residues: Protein-glutamate methylesterase/protein-glutamine glutaminase 1 (357 aa).

One can recognise a Response regulatory domain in the interval Lys7 to Thr124. A 4-aspartylphosphate modification is found at Asp58. A CheB-type methylesterase domain is found at Leu158–Phe350. Residues Ser170, His196, and Asp292 contribute to the active site.

Belongs to the CheB family. Phosphorylated by CheA. Phosphorylation of the N-terminal regulatory domain activates the methylesterase activity.

It localises to the cytoplasm. The catalysed reaction is [protein]-L-glutamate 5-O-methyl ester + H2O = L-glutamyl-[protein] + methanol + H(+). It catalyses the reaction L-glutaminyl-[protein] + H2O = L-glutamyl-[protein] + NH4(+). Involved in chemotaxis. Part of a chemotaxis signal transduction system that modulates chemotaxis in response to various stimuli. Catalyzes the demethylation of specific methylglutamate residues introduced into the chemoreceptors (methyl-accepting chemotaxis proteins or MCP) by CheR. Also mediates the irreversible deamidation of specific glutamine residues to glutamic acid. This is Protein-glutamate methylesterase/protein-glutamine glutaminase 1 from Cupriavidus metallidurans (strain ATCC 43123 / DSM 2839 / NBRC 102507 / CH34) (Ralstonia metallidurans).